The primary structure comprises 364 residues: Variable large protein 21 (364 aa).

The first 26 residues, Met-1–Gly-26, serve as a signal peptide directing secretion. A lipid anchor (N-palmitoyl cysteine) is attached at Cys-27. The S-diacylglycerol cysteine moiety is linked to residue Cys-27.

This sequence belongs to the variable large protein (Vlp) family. Alpha subfamily.

The protein resides in the cell outer membrane. Functionally, the Vlp and Vsp proteins are antigenically distinct proteins, only one vlp or vsp gene is transcriptionally active at any one time. Switching between these genes is a mechanism of host immune response evasion. The chain is Variable large protein 21 from Borrelia hermsii.